A 541-amino-acid chain; its full sequence is Arginine--tRNA ligase (541 aa).

Residues 119-129 carry the 'HIGH' region motif; it reads ANPTGPLHIGH.

It belongs to the class-I aminoacyl-tRNA synthetase family. As to quaternary structure, monomer.

Its subcellular location is the cytoplasm. The catalysed reaction is tRNA(Arg) + L-arginine + ATP = L-arginyl-tRNA(Arg) + AMP + diphosphate. The sequence is that of Arginine--tRNA ligase (argS) from Helicobacter pylori (strain ATCC 700392 / 26695) (Campylobacter pylori).